Consider the following 659-residue polypeptide: DNA ligase (659 aa).

NAD(+) contacts are provided by residues 32–36 (DAEYD), 81–82 (SL), and glutamate 110. Lysine 112 (N6-AMP-lysine intermediate) is an active-site residue. Positions 133, 168, 284, and 308 each coordinate NAD(+). Positions 402, 405, 420, and 425 each coordinate Zn(2+). Residues 582–659 (AKPQIFAGKS…SEEEFAELLP (78 aa)) enclose the BRCT domain.

The protein belongs to the NAD-dependent DNA ligase family. LigA subfamily. Requires Mg(2+) as cofactor. Mn(2+) is required as a cofactor.

The catalysed reaction is NAD(+) + (deoxyribonucleotide)n-3'-hydroxyl + 5'-phospho-(deoxyribonucleotide)m = (deoxyribonucleotide)n+m + AMP + beta-nicotinamide D-nucleotide.. In terms of biological role, DNA ligase that catalyzes the formation of phosphodiester linkages between 5'-phosphoryl and 3'-hydroxyl groups in double-stranded DNA using NAD as a coenzyme and as the energy source for the reaction. It is essential for DNA replication and repair of damaged DNA. This is DNA ligase from Desulfitobacterium hafniense (strain Y51).